Reading from the N-terminus, the 536-residue chain is Zinc finger protein 623 (536 aa).

The disordered stretch occupies residues 57–77; the sequence is GELLGNPEGQSLGSSPSQDRG. A compositionally biased stretch (polar residues) spans 64–74; that stretch reads EGQSLGSSPSQ. 13 C2H2-type zinc fingers span residues 123 to 145, 151 to 173, 179 to 201, 207 to 229, 235 to 257, 263 to 285, 291 to 313, 319 to 341, 347 to 369, 375 to 397, 403 to 425, 431 to 453, and 459 to 481; these read NPCDICGKTFTFNSDLVRHRISH, YTCDQCGKGFGQSSHLMEHQRIH, YVCNVCGKDFIHYSGLIEHQRVH, FKCAQCGKAFCHSSDLIRHQRVH, FECKECGKGFSQSSLLIRHQRIH, YECNECGKSFIRSSSLIRHYQIH, YECKECGKAFRHRSDLIEHQRIH, FECNECGKAFIRSSKLIQHQRIH, YVCNECGKRFSQTSNFTQHQRIH, YECNECGKAFFLSSYLIRHQKIH, YECKECGKAFLQKAHLTEHQKIH, FECKDCGKAFIQSSKLLLHQIIH, and YVCSYCGKGFIQRSNFLQHQKIH. Residue K445 forms a Glycyl lysine isopeptide (Lys-Gly) (interchain with G-Cter in SUMO2) linkage. The tract at residues 513 to 536 is disordered; that stretch reads LSLSKAPIHLGERSVDKGEHTGNL. The segment covering 522–536 has biased composition (basic and acidic residues); sequence LGERSVDKGEHTGNL.

Belongs to the krueppel C2H2-type zinc-finger protein family.

The protein localises to the nucleus. In terms of biological role, may be involved in transcriptional regulation. The sequence is that of Zinc finger protein 623 (ZNF623) from Homo sapiens (Human).